The chain runs to 248 residues: Indole-3-glycerol phosphate synthase (248 aa).

Belongs to the TrpC family.

It catalyses the reaction 1-(2-carboxyphenylamino)-1-deoxy-D-ribulose 5-phosphate + H(+) = (1S,2R)-1-C-(indol-3-yl)glycerol 3-phosphate + CO2 + H2O. It participates in amino-acid biosynthesis; L-tryptophan biosynthesis; L-tryptophan from chorismate: step 4/5. The sequence is that of Indole-3-glycerol phosphate synthase from Sulfolobus acidocaldarius (strain ATCC 33909 / DSM 639 / JCM 8929 / NBRC 15157 / NCIMB 11770).